Consider the following 192-residue polypeptide: ADP-ribose glycohydrolase AF_1521 (192 aa).

The Macro domain occupies methionine 1–leucine 192. Residues glycine 19–isoleucine 21, alanine 32–asparagine 34, histidine 39–alanine 44, and valine 140–glycine 146 each bind substrate.

The catalysed reaction is 5-O-(ADP-D-ribosyl)-L-glutamyl-[protein] + H2O = L-glutamyl-[protein] + ADP-D-ribose + H(+). It catalyses the reaction 4-O-(ADP-D-ribosyl)-L-aspartyl-[protein] + H2O = L-aspartyl-[protein] + ADP-D-ribose + H(+). The enzyme catalyses alpha-NAD(+) + H2O = ADP-D-ribose + nicotinamide + H(+). Removes ADP-ribose from aspartate and glutamate residues in proteins bearing a single ADP-ribose moiety. Inactive towards proteins bearing poly-ADP-ribose. Catalyzes removal of a phosphate group from ADP-ribose 1''-phosphate (Appr1p), but with low efficiency. The protein is ADP-ribose glycohydrolase AF_1521 of Archaeoglobus fulgidus (strain ATCC 49558 / DSM 4304 / JCM 9628 / NBRC 100126 / VC-16).